The following is a 30-amino-acid chain: U-actitoxin-Bcg2a (30 aa).

C7 and C27 are disulfide-bonded.

The protein localises to the secreted. It localises to the nematocyst. In terms of biological role, possible voltage-gated potassium channel (Kv) blocker. This is U-actitoxin-Bcg2a from Bunodosoma cangicum (Sea anemone).